The chain runs to 125 residues: Small ribosomal subunit protein bS6 (125 aa).

It belongs to the bacterial ribosomal protein bS6 family.

Its function is as follows. Binds together with bS18 to 16S ribosomal RNA. This is Small ribosomal subunit protein bS6 (rpsF) from Pasteurella multocida (strain Pm70).